The following is a 459-amino-acid chain: Protein FAM90A27P (459 aa).

Basic residues predominate over residues 1 to 10; that stretch reads MARHSVHHQA. Disordered stretches follow at residues 1–41, 74–136, 153–239, and 259–459; these read MARH…ESRV, SHKE…WKEP, HTTK…ALQP, and PDAD…SDSD. Residues 125-136 are compositionally biased toward basic and acidic residues; it reads PQEKMQEAWKEP. Over residues 184–194 the composition is skewed to polar residues; it reads HNDSPQLSTCG. Residues 341–353 show a composition bias toward low complexity; it reads KATAETAATKTAT. Residues 415-427 show a composition bias toward polar residues; the sequence is PPENSASAQSPRF.

Belongs to the FAM90 family.

This chain is Protein FAM90A27P (FAM90A27P), found in Homo sapiens (Human).